The chain runs to 465 residues: Methionine aminopeptidase 2-1 (465 aa).

The tract at residues 1–100 is disordered; the sequence is MGSKTAENES…QSSPPRIPLA (100 aa). Basic and acidic residues predominate over residues 31 to 40; sequence RGAHWSRDGD. The segment covering 75–87 has biased composition (basic residues); that stretch reads SKKRKKRPKKKTS. A substrate-binding site is contributed by H216. A divalent metal cation contacts are provided by D237, D248, and H317. H325 is a binding site for substrate. E350 and E446 together coordinate a divalent metal cation.

It belongs to the peptidase M24A family. Methionine aminopeptidase eukaryotic type 2 subfamily. It depends on Co(2+) as a cofactor. Requires Zn(2+) as cofactor. Mn(2+) serves as cofactor. Fe(2+) is required as a cofactor.

The protein resides in the cytoplasm. It catalyses the reaction Release of N-terminal amino acids, preferentially methionine, from peptides and arylamides.. In terms of biological role, cotranslationally removes the N-terminal methionine from nascent proteins. The N-terminal methionine is often cleaved when the second residue in the primary sequence is small and uncharged (Met-Ala-, Cys, Gly, Pro, Ser, Thr, or Val). The sequence is that of Methionine aminopeptidase 2-1 from Penicillium rubens (strain ATCC 28089 / DSM 1075 / NRRL 1951 / Wisconsin 54-1255) (Penicillium chrysogenum).